The sequence spans 503 residues: MEFSVKSGSPEKQRSACIVVGVFEPRRLSPIAEQLDKISDGYISALLRRGELEGKPGQTLLLHHVPNVLSERILLIGCGKERELDERQYKQVIQKTINTLNDTGSMEAVCFLTELHVKGRNNYWKVRQAVETAKETLYSSDQLKTNKSEPRRPLRKMVFNVPTRRELTSGERAIQHGLAIAAGIKAAKDLGNMPPNICNAAYLASQARQLADSYSKNVITRVIGEQQMKELGMHSYLAVGQGSQNESLMSVIEYKGNASEDARPIVLVGKGLTFDSGGISIKPSEGMDEMKYDMCGAAAVYGVMRMVAELQLPINVIGVLAGCENMPGGRAYRPGDVLTTMSGQTVEVLNTDAEGRLVLCDVLTYVERFEPEAVIDVATLTGACVIALGHHITGLMANHNPLAHELIAASEQSGDRAWRLPLGDEYQEQLESNFADMANIGGRPGGAITAGCFLSRFTRKYNWAHLDIAGTAWRSGKAKGATGRPVALLAQFLLNRAGFNGEE.

Positions 270 and 275 each coordinate Mn(2+). The active site involves K282. Residues D293, D352, and E354 each coordinate Mn(2+). The active site involves R356.

Belongs to the peptidase M17 family. Mn(2+) is required as a cofactor.

Its subcellular location is the cytoplasm. The enzyme catalyses Release of an N-terminal amino acid, Xaa-|-Yaa-, in which Xaa is preferably Leu, but may be other amino acids including Pro although not Arg or Lys, and Yaa may be Pro. Amino acid amides and methyl esters are also readily hydrolyzed, but rates on arylamides are exceedingly low.. It carries out the reaction Release of an N-terminal amino acid, preferentially leucine, but not glutamic or aspartic acids.. Its function is as follows. Presumably involved in the processing and regular turnover of intracellular proteins. Catalyzes the removal of unsubstituted N-terminal amino acids from various peptides. The sequence is that of Probable cytosol aminopeptidase from Escherichia fergusonii (strain ATCC 35469 / DSM 13698 / CCUG 18766 / IAM 14443 / JCM 21226 / LMG 7866 / NBRC 102419 / NCTC 12128 / CDC 0568-73).